A 490-amino-acid chain; its full sequence is Aspartyl/glutamyl-tRNA(Asn/Gln) amidotransferase subunit B (490 aa).

The protein belongs to the GatB/GatE family. GatB subfamily. In terms of assembly, heterotrimer of A, B and C subunits.

The enzyme catalyses L-glutamyl-tRNA(Gln) + L-glutamine + ATP + H2O = L-glutaminyl-tRNA(Gln) + L-glutamate + ADP + phosphate + H(+). It catalyses the reaction L-aspartyl-tRNA(Asn) + L-glutamine + ATP + H2O = L-asparaginyl-tRNA(Asn) + L-glutamate + ADP + phosphate + 2 H(+). In terms of biological role, allows the formation of correctly charged Asn-tRNA(Asn) or Gln-tRNA(Gln) through the transamidation of misacylated Asp-tRNA(Asn) or Glu-tRNA(Gln) in organisms which lack either or both of asparaginyl-tRNA or glutaminyl-tRNA synthetases. The reaction takes place in the presence of glutamine and ATP through an activated phospho-Asp-tRNA(Asn) or phospho-Glu-tRNA(Gln). The polypeptide is Aspartyl/glutamyl-tRNA(Asn/Gln) amidotransferase subunit B (Prochlorococcus marinus (strain AS9601)).